A 370-amino-acid chain; its full sequence is Protein-glutamate methylesterase/protein-glutamine glutaminase 3 (370 aa).

The region spanning 3 to 119 is the Response regulatory domain; that stretch reads KVLIVDDSAL…SLNVSRIERE (117 aa). Aspartate 53 bears the 4-aspartylphosphate mark. The 195-residue stretch at 166 to 360 folds into the CheB-type methylesterase domain; the sequence is SLTEIGVVLI…GQLNAWMSRT (195 aa). Active-site residues include serine 178, histidine 205, and aspartate 302.

The protein belongs to the CheB family. In terms of processing, phosphorylated by CheA. Phosphorylation of the N-terminal regulatory domain activates the methylesterase activity.

It is found in the cytoplasm. The enzyme catalyses [protein]-L-glutamate 5-O-methyl ester + H2O = L-glutamyl-[protein] + methanol + H(+). It catalyses the reaction L-glutaminyl-[protein] + H2O = L-glutamyl-[protein] + NH4(+). In terms of biological role, involved in chemotaxis. Part of a chemotaxis signal transduction system that modulates chemotaxis in response to various stimuli. Catalyzes the demethylation of specific methylglutamate residues introduced into the chemoreceptors (methyl-accepting chemotaxis proteins or MCP) by CheR. Also mediates the irreversible deamidation of specific glutamine residues to glutamic acid. This is Protein-glutamate methylesterase/protein-glutamine glutaminase 3 from Rhodospirillum rubrum (strain ATCC 11170 / ATH 1.1.1 / DSM 467 / LMG 4362 / NCIMB 8255 / S1).